The following is a 536-amino-acid chain: Mitogen-activated protein kinase kinase kinase mom-4 (536 aa).

The segment covering 1–20 (MDNSSQSKPSSSSSSHSPSP) has biased composition (low complexity). A disordered region spans residues 1–34 (MDNSSQSKPSSSSSSHSPSPAAITPTQRTTRDSG). A Protein kinase domain is found at 51-305 (NLNSHYLGKG…SSECVEYFTL (255 aa)). ATP is bound by residues 57 to 65 (LGKGTYGLV) and lysine 84. The active-site Proton acceptor is the aspartate 176. Residues 314–438 (SVPLSDSSTN…EHRRDSNDEE (125 aa)) are disordered. Composition is skewed to polar residues over residues 315–325 (VPLSDSSTNGP) and 350–366 (NNRT…QQPG). Positions 405 to 438 (KNFRDRAKSEQRQPHRDARPPPPFEHRRDSNDEE) are enriched in basic and acidic residues.

This sequence belongs to the protein kinase superfamily. STE Ser/Thr protein kinase family. MAP kinase kinase kinase subfamily. Interacts with, and is activated by, tap-1. The cofactor is Mg(2+). In terms of processing, may be autophosphorylated.

It catalyses the reaction L-seryl-[protein] + ATP = O-phospho-L-seryl-[protein] + ADP + H(+). The catalysed reaction is L-threonyl-[protein] + ATP = O-phospho-L-threonyl-[protein] + ADP + H(+). In terms of biological role, part of the Wnt signaling pathway essential for the specification of the mesodermal cell fate in early embryos. Stimulates the wrm-1/lit-1-dependent phosphorylation of pop-1 and plays a role in the initial nuclear accumulation of wrm-1. This chain is Mitogen-activated protein kinase kinase kinase mom-4, found in Caenorhabditis elegans.